The primary structure comprises 1391 residues: DNA-directed RNA polymerase subunit beta' (1391 aa).

Zn(2+) is bound by residues Cys72, Cys74, Cys87, and Cys90. Asp462, Asp464, and Asp466 together coordinate Mg(2+). Residues Cys816, Cys890, Cys897, and Cys900 each coordinate Zn(2+).

This sequence belongs to the RNA polymerase beta' chain family. The RNAP catalytic core consists of 2 alpha, 1 beta, 1 beta' and 1 omega subunit. When a sigma factor is associated with the core the holoenzyme is formed, which can initiate transcription. Mg(2+) is required as a cofactor. Zn(2+) serves as cofactor.

It catalyses the reaction RNA(n) + a ribonucleoside 5'-triphosphate = RNA(n+1) + diphosphate. Its function is as follows. DNA-dependent RNA polymerase catalyzes the transcription of DNA into RNA using the four ribonucleoside triphosphates as substrates. The chain is DNA-directed RNA polymerase subunit beta' from Neisseria meningitidis serogroup C (strain 053442).